Consider the following 535-residue polypeptide: Glucose-6-phosphate isomerase (535 aa).

Residue glutamate 347 is the Proton donor of the active site. Active-site residues include histidine 378 and lysine 493.

The protein belongs to the GPI family.

It is found in the cytoplasm. The enzyme catalyses alpha-D-glucose 6-phosphate = beta-D-fructose 6-phosphate. The protein operates within carbohydrate biosynthesis; gluconeogenesis. Its pathway is carbohydrate degradation; glycolysis; D-glyceraldehyde 3-phosphate and glycerone phosphate from D-glucose: step 2/4. In terms of biological role, catalyzes the reversible isomerization of glucose-6-phosphate to fructose-6-phosphate. This chain is Glucose-6-phosphate isomerase, found in Chlamydia felis (strain Fe/C-56) (Chlamydophila felis).